The following is a 375-amino-acid chain: DNA replication and repair protein RecF (375 aa).

30 to 37 (GENAQGKT) contacts ATP.

This sequence belongs to the RecF family.

It localises to the cytoplasm. Functionally, the RecF protein is involved in DNA metabolism; it is required for DNA replication and normal SOS inducibility. RecF binds preferentially to single-stranded, linear DNA. It also seems to bind ATP. The protein is DNA replication and repair protein RecF of Bacillus anthracis (strain A0248).